Reading from the N-terminus, the 144-residue chain is Small ribosomal subunit protein uS12 (144 aa).

Position 103 is a 3-methylthioaspartic acid (aspartate 103). Positions 125-144 (QQGRSRYGAKKGKAAPAKKK) are disordered. Basic residues predominate over residues 131–144 (YGAKKGKAAPAKKK).

This sequence belongs to the universal ribosomal protein uS12 family. As to quaternary structure, part of the 30S ribosomal subunit. Contacts proteins S8 and S17. May interact with IF1 in the 30S initiation complex.

Functionally, with S4 and S5 plays an important role in translational accuracy. In terms of biological role, interacts with and stabilizes bases of the 16S rRNA that are involved in tRNA selection in the A site and with the mRNA backbone. Located at the interface of the 30S and 50S subunits, it traverses the body of the 30S subunit contacting proteins on the other side and probably holding the rRNA structure together. The combined cluster of proteins S8, S12 and S17 appears to hold together the shoulder and platform of the 30S subunit. The sequence is that of Small ribosomal subunit protein uS12 from Dehalococcoides mccartyi (strain ATCC BAA-2100 / JCM 16839 / KCTC 5957 / BAV1).